The sequence spans 644 residues: 2-isopropylmalate synthase (644 aa).

Residues Met1–Ser40 form a disordered region. Over residues Pro31–Ser40 the composition is skewed to polar residues. Positions Pro72–Asp346 constitute a Pyruvate carboxyltransferase domain. Positions 81, 285, 287, and 321 each coordinate Mg(2+). The tract at residues Pro491–Arg644 is regulatory domain. One copy of the VNTR1 repeat lies at Val575–Pro593. Positions Ala581–Pro612 are disordered. Residues Val594–Pro612 form a VNTR2 repeat.

Belongs to the alpha-IPM synthase/homocitrate synthase family. LeuA type 2 subfamily. Homodimer. The cofactor is Mg(2+).

It is found in the cytoplasm. It catalyses the reaction 3-methyl-2-oxobutanoate + acetyl-CoA + H2O = (2S)-2-isopropylmalate + CoA + H(+). It functions in the pathway amino-acid biosynthesis; L-leucine biosynthesis; L-leucine from 3-methyl-2-oxobutanoate: step 1/4. Its function is as follows. Catalyzes the condensation of the acetyl group of acetyl-CoA with 3-methyl-2-oxobutanoate (2-ketoisovalerate) to form 3-carboxy-3-hydroxy-4-methylpentanoate (2-isopropylmalate). This is 2-isopropylmalate synthase from Mycobacterium tuberculosis (strain CDC 1551 / Oshkosh).